Consider the following 192-residue polypeptide: Large ribosomal subunit protein bL25 (192 aa).

This sequence belongs to the bacterial ribosomal protein bL25 family. CTC subfamily. Part of the 50S ribosomal subunit; part of the 5S rRNA/L5/L18/L25 subcomplex. Contacts the 5S rRNA. Binds to the 5S rRNA independently of L5 and L18.

In terms of biological role, this is one of the proteins that binds to the 5S RNA in the ribosome where it forms part of the central protuberance. In Marinomonas sp. (strain MWYL1), this protein is Large ribosomal subunit protein bL25.